A 505-amino-acid chain; its full sequence is AMP phosphorylase (505 aa).

AMP-binding positions include glycine 170, 196–201 (SRAITS), and threonine 205. The active-site Proton donor is aspartate 258. Serine 266 and lysine 290 together coordinate AMP.

Belongs to the thymidine/pyrimidine-nucleoside phosphorylase family. Type 2 subfamily.

The catalysed reaction is AMP + phosphate = alpha-D-ribose 1,5-bisphosphate + adenine. It catalyses the reaction CMP + phosphate = cytosine + alpha-D-ribose 1,5-bisphosphate. The enzyme catalyses UMP + phosphate = alpha-D-ribose 1,5-bisphosphate + uracil. Its function is as follows. Catalyzes the conversion of AMP and phosphate to adenine and ribose 1,5-bisphosphate (R15P). Exhibits phosphorylase activity toward CMP and UMP in addition to AMP. Functions in an archaeal AMP degradation pathway, together with R15P isomerase and RubisCO. The polypeptide is AMP phosphorylase (Methanococcus maripaludis (strain C5 / ATCC BAA-1333)).